Reading from the N-terminus, the 400-residue chain is NADH-quinone oxidoreductase subunit D (400 aa).

The protein belongs to the complex I 49 kDa subunit family. In terms of assembly, NDH-1 is composed of 14 different subunits. Subunits NuoB, C, D, E, F, and G constitute the peripheral sector of the complex.

The protein resides in the cell inner membrane. It catalyses the reaction a quinone + NADH + 5 H(+)(in) = a quinol + NAD(+) + 4 H(+)(out). In terms of biological role, NDH-1 shuttles electrons from NADH, via FMN and iron-sulfur (Fe-S) centers, to quinones in the respiratory chain. The immediate electron acceptor for the enzyme in this species is believed to be a menaquinone. Couples the redox reaction to proton translocation (for every two electrons transferred, four hydrogen ions are translocated across the cytoplasmic membrane), and thus conserves the redox energy in a proton gradient. The protein is NADH-quinone oxidoreductase subunit D of Pelodictyon phaeoclathratiforme (strain DSM 5477 / BU-1).